Here is a 365-residue protein sequence, read N- to C-terminus: Chorismate synthase (365 aa).

Arg-47 lines the NADP(+) pocket. FMN-binding positions include Arg-124–Ser-126, Gly-287, Lys-302–Thr-306, and Arg-328. Positions Phe-266 to Ser-290 are disordered.

Belongs to the chorismate synthase family. In terms of assembly, homotetramer. It depends on FMNH2 as a cofactor.

It carries out the reaction 5-O-(1-carboxyvinyl)-3-phosphoshikimate = chorismate + phosphate. It functions in the pathway metabolic intermediate biosynthesis; chorismate biosynthesis; chorismate from D-erythrose 4-phosphate and phosphoenolpyruvate: step 7/7. Catalyzes the anti-1,4-elimination of the C-3 phosphate and the C-6 proR hydrogen from 5-enolpyruvylshikimate-3-phosphate (EPSP) to yield chorismate, which is the branch point compound that serves as the starting substrate for the three terminal pathways of aromatic amino acid biosynthesis. This reaction introduces a second double bond into the aromatic ring system. In Prochlorococcus marinus (strain MIT 9301), this protein is Chorismate synthase.